The chain runs to 361 residues: G-protein coupled receptor 52 (361 aa).

Topologically, residues 1–44 (MNDSRWTEWRILNTSSGILNVSERHSCPLGFGHYSAVDVCIFET) are extracellular. N-linked (GlcNAc...) asparagine glycans are attached at residues N2, N13, and N20. The helical transmembrane segment at 45–65 (IVIVLLTFLIIAGNLTVIFVF) threads the bilayer. Over 66-87 (HCAPLLHHYTTSYFIQTMAYAD) the chain is Cytoplasmic. The helical transmembrane segment at 88–108 (LFVGVSCLVPTLSLLHYSTGI) threads the bilayer. The Extracellular segment spans residues 109–115 (HESLTCQ). A disulfide bridge links C114 with C193. The helical transmembrane segment at 116–136 (VFGYIISVLKSVSMACLACIS) threads the bilayer. At 137–159 (VDRYLAITKPLSYNQLVTPCRLR) the chain is on the cytoplasmic side. The chain crosses the membrane as a helical span at residues 160–180 (ICIILIWIYSCLIFLPSFFGW). Residues 181–200 (GKPGYHGDIFEWCATSWLTS) are Extracellular-facing. The helical transmembrane segment at 201 to 221 (AYFTGFIVCLLYAPAALVVCF) threads the bilayer. The Cytoplasmic portion of the chain corresponds to 222–265 (TYFHIFKICRQHTKEINDRRARFPSHEAAASRDAGHSPDRRYAM). Residues 266–286 (VLFRITSVFYMLWLPYIIYFL) traverse the membrane as a helical segment. Residues 287–296 (LESSRVLDNP) are Extracellular-facing. A helical transmembrane segment spans residues 297–317 (TLSFLTTWLAISNSFCNCVIY). The Cytoplasmic segment spans residues 318-361 (SLSNSVFRLGLRRLSETMCTSCMCVKDKEARDPKPRKRANSCSI).

The protein belongs to the G-protein coupled receptor 1 family.

It is found in the cell membrane. Functionally, G- protein coupled receptor activated by antipsychotics reserpine leading to an increase in intracellular cAMP and its internalization. May play a role in locomotor activity through modulation of dopamine, NMDA and ADORA2A-induced locomotor activity. These behavioral changes are accompanied by modulation of the dopamine receptor signaling pathway in striatum. Modulates HTT level via cAMP-dependent but PKA independent mechanisms throught activation of RAB39B that translocates HTT to the endoplasmic reticulum, thus avoiding proteasome degradation. The polypeptide is G-protein coupled receptor 52 (Bos taurus (Bovine)).